Reading from the N-terminus, the 286-residue chain is Octanoyltransferase (286 aa).

The 229-residue stretch at 50 to 278 folds into the BPL/LPL catalytic domain; that stretch reads LRTPDELWIV…NIAQRHAGVI (229 aa). Substrate contacts are provided by residues 89-96, 190-192, and 203-205; these read RGGQVTWH, SLG, and GVA. The active-site Acyl-thioester intermediate is the Cys221.

The protein belongs to the LipB family.

The protein resides in the cytoplasm. The catalysed reaction is octanoyl-[ACP] + L-lysyl-[protein] = N(6)-octanoyl-L-lysyl-[protein] + holo-[ACP] + H(+). The protein operates within protein modification; protein lipoylation via endogenous pathway; protein N(6)-(lipoyl)lysine from octanoyl-[acyl-carrier-protein]: step 1/2. In terms of biological role, catalyzes the transfer of endogenously produced octanoic acid from octanoyl-acyl-carrier-protein onto the lipoyl domains of lipoate-dependent enzymes. Lipoyl-ACP can also act as a substrate although octanoyl-ACP is likely to be the physiological substrate. The polypeptide is Octanoyltransferase (Psychrobacter arcticus (strain DSM 17307 / VKM B-2377 / 273-4)).